A 512-amino-acid polypeptide reads, in one-letter code: 2,3-bisphosphoglycerate-independent phosphoglycerate mutase (512 aa).

Mn(2+) is bound by residues aspartate 11 and serine 61. Residue serine 61 is the Phosphoserine intermediate of the active site. Residues histidine 122, 152–153 (RD), arginine 184, arginine 190, 259–262 (RADR), and lysine 332 contribute to the substrate site. Mn(2+) is bound by residues aspartate 399, histidine 403, aspartate 440, histidine 441, and histidine 459.

This sequence belongs to the BPG-independent phosphoglycerate mutase family. As to quaternary structure, monomer. Mn(2+) serves as cofactor.

The catalysed reaction is (2R)-2-phosphoglycerate = (2R)-3-phosphoglycerate. Its pathway is carbohydrate degradation; glycolysis; pyruvate from D-glyceraldehyde 3-phosphate: step 3/5. Its function is as follows. Catalyzes the interconversion of 2-phosphoglycerate and 3-phosphoglycerate. This chain is 2,3-bisphosphoglycerate-independent phosphoglycerate mutase, found in Francisella philomiragia subsp. philomiragia (strain ATCC 25017 / CCUG 19701 / FSC 153 / O#319-036).